A 247-amino-acid chain; its full sequence is MTHSTLPPQPFAILAMPRTGTHYLEELVNEHPNVLSNGELLNTYDTNWPDKERLLLSDRELLERAFLRYPPHSDKKVTHVGCKINEPQFQERPSFFAELTAWPGLKVILVIRRNTLESLRSFVQARQTRQWLKFKSDSSAPPPPVMLPFATCEAYFKAADDFHARVVYAFDSSRIRLIEYERLLRDPVPCVATVLDFLGAPALQLADRGILRRQETRPLDQTVRNFHELRVHFANGPYARFFELAND.

The interval 1-17 is hydrophobic; sequence MTHSTLPPQPFAILAMP.

In terms of biological role, required for the formation of sulfated nod factor. Proposed to transfer activated sulfate (PAPS) to a N-acetylglucosamine of the nod factor. This is Nodulation protein H (nodH) from Rhizobium meliloti (strain 1021) (Ensifer meliloti).